Reading from the N-terminus, the 252-residue chain is 5'-nucleotidase SurE (252 aa).

Asp8, Asp9, Ser39, and Asn91 together coordinate a divalent metal cation.

Belongs to the SurE nucleotidase family. Requires a divalent metal cation as cofactor.

It localises to the cytoplasm. It catalyses the reaction a ribonucleoside 5'-phosphate + H2O = a ribonucleoside + phosphate. In terms of biological role, nucleotidase that shows phosphatase activity on nucleoside 5'-monophosphates. This chain is 5'-nucleotidase SurE, found in Geobacter metallireducens (strain ATCC 53774 / DSM 7210 / GS-15).